A 566-amino-acid chain; its full sequence is Deformed epidermal autoregulatory factor 1 homolog (566 aa).

2 disordered regions span residues 33–62 and 163–191; these read AESE…ETRR and GLKG…KGGT. Positions 170–182 are enriched in pro residues; it reads PLTPGPQSPPTPL. Phosphothreonine is present on threonine 172. Position 177 is a phosphoserine (serine 177). A Phosphothreonine modification is found at threonine 180. The region spanning 194-274 is the SAND domain; it reads NWDPSVYDSE…QCLIQDGILN (81 aa). A Nuclear localization signal motif is present at residues 300-306; it reads PYKRRKK. The tract at residues 404-479 is interaction with LMO4; sequence IAPFPEAALP…QLKTLFEQAK (76 aa). Threonine 433 is subject to Phosphothreonine. Phosphoserine occurs at positions 444 and 449. 8 residues coordinate Zn(2+): cysteine 505, cysteine 508, cysteine 516, cysteine 519, cysteine 525, cysteine 529, histidine 537, and cysteine 541. The MYND-type zinc-finger motif lies at 505–541; that stretch reads CVNCGREAMSECTGCHKVNYCSTFCQRKDWKDHQHVC.

Homodimer. Isoform 1 and isoform 2 may form a heterodimer. May interact with the corepressors NCOR1 and NCRO2. Identified in a complex with XRCC5 and XRCC6. Interacts (via the SAND domain) with the DNA-PK complex subunit XRCC6; the interaction is direct with XRCC6 and may be inhibited by DNA-binding. Interacts with LMO4; LMO4 blocks export from nucleus. Interacts with LMO2 and CLIM2. May be phosphorylated by DNA-PK complex in a DNA independent manner (in vitro). Ubiquitously expressed during embryogenesis, with higher expression in regions of the central nervous system, dorsal root ganglia, submandibular gland, epidermis and breast. In 12-week-old NOD mice, expression of isoform 2 is sevenfold higher in lymph node stromal elements than in T-cells and tenfold higher than in B-cells.

It is found in the nucleus. Its subcellular location is the cytoplasm. In terms of biological role, transcription factor that binds to sequence with multiple copies of 5'-TTC[CG]G-3' present in its own promoter and that of the HNRPA2B1 gene. Down-regulates transcription of these genes. Binds to the retinoic acid response element (RARE) 5'-AGGGTTCACCGAAAGTTCA-3'. Activates the proenkephalin gene independently of promoter binding, probably through protein-protein interaction. Regulates epithelial cell proliferation and side-branching in the mammary gland. Required for neural tube closure and skeletal patterning. Controls the expression of peripheral tissue antigens in pancreatic lymph nodes. Isoform 1 displays greater transcriptional activity than isoform 2. Isoform 2 may inhibit transcriptional activity of isoform 1 by interacting with it and retaining it in the cytoplasm. Transcriptional activator of EIF4G3. May also involved in behavior. This chain is Deformed epidermal autoregulatory factor 1 homolog (Deaf1), found in Mus musculus (Mouse).